Consider the following 412-residue polypeptide: Inositol polyphosphate-5-phosphatase A (412 aa).

A lipid anchor (S-farnesyl cysteine) is attached at Cys-409. Positions 410-412 (VVQ) are cleaved as a propeptide — removed in mature form.

It belongs to the inositol 1,4,5-trisphosphate 5-phosphatase type I family. As to quaternary structure, interacts with TASOR. In terms of processing, isoprenylation at Cys-409 is required for localization at the membrane.

It is found in the cell membrane. The protein localises to the cell projection. The protein resides in the dendrite. It carries out the reaction 1D-myo-inositol 1,4,5-trisphosphate + H2O = 1D-myo-inositol 1,4-bisphosphate + phosphate. The enzyme catalyses 1D-myo-inositol 1,3,4,5-tetrakisphosphate + H2O = 1D-myo-inositol 1,3,4-trisphosphate + phosphate. With respect to regulation, inhibited by EDTA and 2,3-bisphosphoglycerate. Its function is as follows. Phosphatase that specifically hydrolyzes the 5-phosphate of inositol 1,4,5-trisphosphate to inositol 1,4-bisphosphate, and inositol 1,3,4,5-tetrasphosphate to inositol 1,3,4-trisphosphate. Plays a crucial role in the survival of cerebellar Purkinje cells. The protein is Inositol polyphosphate-5-phosphatase A (INPP5A) of Canis lupus familiaris (Dog).